The primary structure comprises 1363 residues: Neurexin-1 (1363 aa).

At serine 1–threonine 1287 the chain is on the extracellular side. Residue asparagine 49 is glycosylated (N-linked (GlcNAc...) asparagine). Residues glutamine 67 to serine 105 form the EGF-like 1 domain. Disulfide bonds link cysteine 71-cysteine 83, cysteine 77-cysteine 92, and cysteine 94-cysteine 104. 2 consecutive Laminin G-like domains span residues isoleucine 132–cysteine 329 and aspartate 336–cysteine 528. Ca(2+)-binding residues include aspartate 178, leucine 195, and methionine 263. Disulfide bonds link cysteine 293-cysteine 329, cysteine 499-cysteine 528, cysteine 536-cysteine 547, cysteine 541-cysteine 556, and cysteine 558-cysteine 568. The EGF-like 2 domain maps to threonine 532 to glutamate 569. 2 consecutive Laminin G-like domains span residues isoleucine 574 to cysteine 747 and aspartate 761 to cysteine 936. Asparagine 646 is a glycosylation site (N-linked (GlcNAc...) asparagine). 4 disulfide bridges follow: cysteine 908–cysteine 936, cysteine 943–cysteine 954, cysteine 948–cysteine 963, and cysteine 965–cysteine 975. One can recognise an EGF-like 3 domain in the interval proline 939–asparagine 976. In terms of domain architecture, Laminin G-like 5 spans tyrosine 982–valine 1180. The N-linked (GlcNAc...) asparagine glycan is linked to asparagine 1079. The interval cysteine 1244–isoleucine 1280 is disordered. Residues glycine 1288–methionine 1308 traverse the membrane as a helical segment. Over tyrosine 1309–valine 1363 the chain is Cytoplasmic. The segment at asparagine 1330 to valine 1363 is disordered.

Belongs to the neurexin family. The cytoplasmic C-terminal region binds to CASK. The laminin G-like domain 1 binds to NXPH1. Specific isoforms bind to alpha-dystroglycan and to alpha-latrotoxin. N- and O-glycosylated.

It localises to the membrane. In terms of biological role, neuronal cell surface protein that may be involved in cell recognition and cell adhesion. May mediate intracellular signaling. The chain is Neurexin-1 (NRXN1) from Gallus gallus (Chicken).